A 1510-amino-acid polypeptide reads, in one-letter code: Chromosome partition protein MukB (1510 aa).

Residues 6-30 (ELENEIELESDEVIMENENVEEIVD) adopt a coiled-coil conformation. Residue 75–82 (GGNGAGKS) coordinates ATP. 7 coiled-coil regions span residues 346–506 (QHRL…HKMS), 553–633 (QQTP…NLTA), 673–706 (MQSQ…RLSQ), 821–847 (RAAR…QIAF), 876–1064 (EELM…IQLQ), 1094–1149 (ERAR…RELV), and 1249–1305 (DAIE…QNIS). Positions 707 to 824 (PDGSEDPRLN…EIPLFGRAAR (118 aa)) are flexible hinge.

Belongs to the SMC family. MukB subfamily. Homodimerization via its hinge domain. Binds to DNA via its C-terminal region. Interacts, and probably forms a ternary complex, with MukE and MukF via its C-terminal region. The complex formation is stimulated by calcium or magnesium. Interacts with tubulin-related protein FtsZ.

It is found in the cytoplasm. It localises to the nucleoid. In terms of biological role, plays a central role in chromosome condensation, segregation and cell cycle progression. Functions as a homodimer, which is essential for chromosome partition. Involved in negative DNA supercoiling in vivo, and by this means organize and compact chromosomes. May achieve or facilitate chromosome segregation by condensation DNA from both sides of a centrally located replisome during cell division. This is Chromosome partition protein MukB from Haemophilus influenzae (strain 86-028NP).